We begin with the raw amino-acid sequence, 231 residues long: NDR1/HIN1-like protein 3 (231 aa).

The chain crosses the membrane as a helical span at residues 47–67; sequence VIFNILITIAVLLGIAALIIW. N-linked (GlcNAc...) asparagine glycans are attached at residues Asn102, Asn135, Asn145, and Asn215.

As to quaternary structure, may form oligomers or be a component of larger protein complex in plasma membranes. Glycosylated. As to expression, expressed in roots, young and senescing leaves, cauline leaves, stems and siliques.

The protein resides in the cell membrane. Its function is as follows. Confers resistance to Pseudomonas syringae pv. tomato DC3000 (Pst DC3000). In Arabidopsis thaliana (Mouse-ear cress), this protein is NDR1/HIN1-like protein 3.